Here is a 476-residue protein sequence, read N- to C-terminus: Xylan O-acetyltransferase 4 (476 aa).

The disordered stretch occupies residues Met1–Ser37. Residues Met1–Pro63 lie on the Cytoplasmic side of the membrane. Over residues Ser8–Thr18 the composition is skewed to low complexity. Pro residues predominate over residues Ser19 to Ala31. Residues Val64–Gly80 form a helical; Signal-anchor for type II membrane protein membrane-spanning segment. Over Glu81–Gln476 the chain is Lumenal. N-linked (GlcNAc...) asparagine glycans are attached at residues Asn103, Asn128, and Asn167. 4 disulfides stabilise this stretch: Cys117/Cys168, Cys139/Cys204, Cys148/Cys444, and Cys360/Cys440. The GDS motif signature appears at Gly191–Ser193. Ser193 functions as the Nucleophile in the catalytic mechanism. Asn299 and Asn369 each carry an N-linked (GlcNAc...) asparagine glycan. Catalysis depends on Asp439, which acts as the Proton donor. Positions Asp439–His442 match the DXXH motif motif. The active-site Proton acceptor is His442.

It belongs to the PC-esterase family. TBL subfamily. As to expression, highly expressed in leaves. Expressed in roots, stems and inflorescences.

The protein resides in the golgi apparatus membrane. Its function is as follows. Xylan acetyltransferase required for 2-O- and 3-O-monoacetylation of xylosyl residues in xylan. Catalyzes the 2-O-acetylation of xylan, followed by nonenzymatic acetyl migration to the O-3 position, resulting in products that are monoacetylated at both O-2 and O-3 positions. The sequence is that of Xylan O-acetyltransferase 4 from Oryza sativa subsp. japonica (Rice).